The primary structure comprises 160 residues: Transcription elongation factor GreA (160 aa).

Residues 43–75 adopt a coiled-coil conformation; the sequence is LSENAEYEAAREQQAQMESKIVDLENKLTRASI.

Belongs to the GreA/GreB family.

In terms of biological role, necessary for efficient RNA polymerase transcription elongation past template-encoded arresting sites. The arresting sites in DNA have the property of trapping a certain fraction of elongating RNA polymerases that pass through, resulting in locked ternary complexes. Cleavage of the nascent transcript by cleavage factors such as GreA or GreB allows the resumption of elongation from the new 3'terminus. GreA releases sequences of 2 to 3 nucleotides. This chain is Transcription elongation factor GreA, found in Prosthecochloris aestuarii (strain DSM 271 / SK 413).